The sequence spans 442 residues: Xaa-Pro dipeptidase (442 aa).

Residues Asp245, Asp256, His338, Glu383, and Glu422 each contribute to the Mn(2+) site.

Belongs to the peptidase M24B family. Bacterial-type prolidase subfamily. The cofactor is Mn(2+).

The enzyme catalyses Xaa-L-Pro dipeptide + H2O = an L-alpha-amino acid + L-proline. Its function is as follows. Splits dipeptides with a prolyl residue in the C-terminal position. The sequence is that of Xaa-Pro dipeptidase from Sodalis glossinidius (strain morsitans).